The primary structure comprises 154 residues: Crossover junction endodeoxyribonuclease RuvC (154 aa).

Residues aspartate 7, glutamate 67, and aspartate 139 contribute to the active site. Mg(2+)-binding residues include aspartate 7, glutamate 67, and aspartate 139.

It belongs to the RuvC family. In terms of assembly, homodimer which binds Holliday junction (HJ) DNA. The HJ becomes 2-fold symmetrical on binding to RuvC with unstacked arms; it has a different conformation from HJ DNA in complex with RuvA. In the full resolvosome a probable DNA-RuvA(4)-RuvB(12)-RuvC(2) complex forms which resolves the HJ. Requires Mg(2+) as cofactor.

It localises to the cytoplasm. It carries out the reaction Endonucleolytic cleavage at a junction such as a reciprocal single-stranded crossover between two homologous DNA duplexes (Holliday junction).. The RuvA-RuvB-RuvC complex processes Holliday junction (HJ) DNA during genetic recombination and DNA repair. Endonuclease that resolves HJ intermediates. Cleaves cruciform DNA by making single-stranded nicks across the HJ at symmetrical positions within the homologous arms, yielding a 5'-phosphate and a 3'-hydroxyl group; requires a central core of homology in the junction. The consensus cleavage sequence is 5'-(A/T)TT(C/G)-3'. Cleavage occurs on the 3'-side of the TT dinucleotide at the point of strand exchange. HJ branch migration catalyzed by RuvA-RuvB allows RuvC to scan DNA until it finds its consensus sequence, where it cleaves and resolves the cruciform DNA. This chain is Crossover junction endodeoxyribonuclease RuvC, found in Prochlorococcus marinus (strain NATL1A).